We begin with the raw amino-acid sequence, 549 residues long: MSDSPRLTRRPEWTELEDHRAGPLLHPALRELFAADPERAERYVVRAGDLRLDYSKHLITDETLALLQELATATDVFGLRDAMFRGEKINVTENRAVLHTALRAPRDAVIEVDGENVVPAVHAVLDRMADFADRVRSGEWTGHTGSRIRTVVNIGIGGSDLGPAMAYEALRAFTDRSLTVRFVSNVDGADLHEAVRDLDPAETLFVIASKTFTTIETITNATSARSWLLAGLDGDEKAVAKHFVALSTNAGKVSDFGIDTANMFEFWDWVGGRYSFDSAIGLSLMIAIGPERFRELLDGFRIVDEHFRTAPAEANAPLLLGLLGVWYGSFFGAQSHAVLPYSHYLSKFTAYLQQLDMESNGKSVDRDGHPVEWQTGPVVWGTPGTNGQHAYYQLLHQGTKVIPADLIGFINPVDGLSDELAAQHDLLMANLFAQGQALAFGKTGDEVRAEGVPEEQVPHRTFRGNHPTTTILAAELTPSVLGQLIALYEHKVFVQGAIWNIDSFDQWGVELGKVLAKRVEPALTEGADVPGLDPSTAALVAAYRTHRKK.

The Proton donor role is filled by Glu-358. Active-site residues include His-389 and Lys-513.

It belongs to the GPI family.

It localises to the cytoplasm. It catalyses the reaction alpha-D-glucose 6-phosphate = beta-D-fructose 6-phosphate. It participates in carbohydrate biosynthesis; gluconeogenesis. Its pathway is carbohydrate degradation; glycolysis; D-glyceraldehyde 3-phosphate and glycerone phosphate from D-glucose: step 2/4. Catalyzes the reversible isomerization of glucose-6-phosphate to fructose-6-phosphate. The chain is Glucose-6-phosphate isomerase 1 from Streptomyces avermitilis (strain ATCC 31267 / DSM 46492 / JCM 5070 / NBRC 14893 / NCIMB 12804 / NRRL 8165 / MA-4680).